The chain runs to 333 residues: tRNA-dihydrouridine(16) synthase (333 aa).

Residues 19 to 21 (PMQ) and Q80 each bind FMN. The Proton donor role is filled by C110. Residues K151, 211 to 213 (NGD), and 235 to 236 (GR) contribute to the FMN site.

This sequence belongs to the Dus family. DusC subfamily. FMN serves as cofactor.

The catalysed reaction is 5,6-dihydrouridine(16) in tRNA + NADP(+) = uridine(16) in tRNA + NADPH + H(+). It catalyses the reaction 5,6-dihydrouridine(16) in tRNA + NAD(+) = uridine(16) in tRNA + NADH + H(+). Catalyzes the synthesis of 5,6-dihydrouridine (D), a modified base found in the D-loop of most tRNAs, via the reduction of the C5-C6 double bond in target uridines. Specifically modifies U16 in tRNAs. The polypeptide is tRNA-dihydrouridine(16) synthase (Neisseria meningitidis serogroup B (strain ATCC BAA-335 / MC58)).